The primary structure comprises 304 residues: Ornithine carbamoyltransferase (304 aa).

Residues 53 to 56, Gln-80, Arg-104, and 131 to 134 each bind carbamoyl phosphate; these read STRT and HPCQ. L-ornithine contacts are provided by residues Asn-162, Asp-219, and 223-224; that span reads SM. Residues 259–260 and Arg-287 each bind carbamoyl phosphate; that span reads CL.

The protein belongs to the aspartate/ornithine carbamoyltransferase superfamily. OTCase family.

It is found in the cytoplasm. It carries out the reaction carbamoyl phosphate + L-ornithine = L-citrulline + phosphate + H(+). It functions in the pathway amino-acid biosynthesis; L-arginine biosynthesis; L-arginine from L-ornithine and carbamoyl phosphate: step 1/3. Its function is as follows. Reversibly catalyzes the transfer of the carbamoyl group from carbamoyl phosphate (CP) to the N(epsilon) atom of ornithine (ORN) to produce L-citrulline. This Nitrosococcus oceani (strain ATCC 19707 / BCRC 17464 / JCM 30415 / NCIMB 11848 / C-107) protein is Ornithine carbamoyltransferase.